A 444-amino-acid chain; its full sequence is tRNA (guanine-N(7)-)-methyltransferase non-catalytic subunit TRM82 (444 aa).

WD repeat units follow at residues 1 to 47 (MSVI…WSDD), 48 to 99 (FDKI…LGAP), 100 to 147 (PIYS…KRFC), 148 to 192 (FSKR…EPIL), 193 to 237 (GHVS…DKWL), 238 to 279 (FGHK…STFD), and 308 to 354 (FAVS…ITFP). Residues 55 to 92 (RNTTAKEQQGQSSENENENKKLKSNKGDSIKRTAAKVP) are disordered. The span at 71-85 (NENKKLKSNKGDSIK) shows a compositional bias: basic and acidic residues. Phosphoserine is present on Ser93.

Belongs to the WD repeat TRM82 family. Forms a heterodimer with the catalytic subunit TRM8.

It localises to the nucleus. It participates in tRNA modification; N(7)-methylguanine-tRNA biosynthesis. Functionally, required for the formation of N(7)-methylguanine at position 46 (m7G46) in tRNA, a modification required to maintain stability of tRNAs; its absence resulting in tRNA decay. In the complex, it is required to stabilize and induce conformational changes of the catalytic subunit. This Saccharomyces cerevisiae (strain RM11-1a) (Baker's yeast) protein is tRNA (guanine-N(7)-)-methyltransferase non-catalytic subunit TRM82.